Consider the following 240-residue polypeptide: UDP-2,3-diacylglucosamine hydrolase (240 aa).

Mn(2+) contacts are provided by Asp-9, His-11, Asp-43, Asn-81, and His-116. Residue 81-82 (NR) coordinates substrate. Substrate-binding residues include Asp-124, Ser-162, Lys-166, Lys-169, and His-197. Mn(2+) contacts are provided by His-197 and His-199.

It belongs to the LpxH family. The cofactor is Mn(2+).

Its subcellular location is the cell inner membrane. The catalysed reaction is UDP-2-N,3-O-bis[(3R)-3-hydroxytetradecanoyl]-alpha-D-glucosamine + H2O = 2-N,3-O-bis[(3R)-3-hydroxytetradecanoyl]-alpha-D-glucosaminyl 1-phosphate + UMP + 2 H(+). It participates in glycolipid biosynthesis; lipid IV(A) biosynthesis; lipid IV(A) from (3R)-3-hydroxytetradecanoyl-[acyl-carrier-protein] and UDP-N-acetyl-alpha-D-glucosamine: step 4/6. Functionally, hydrolyzes the pyrophosphate bond of UDP-2,3-diacylglucosamine to yield 2,3-diacylglucosamine 1-phosphate (lipid X) and UMP by catalyzing the attack of water at the alpha-P atom. Involved in the biosynthesis of lipid A, a phosphorylated glycolipid that anchors the lipopolysaccharide to the outer membrane of the cell. The polypeptide is UDP-2,3-diacylglucosamine hydrolase (Neisseria meningitidis serogroup C / serotype 2a (strain ATCC 700532 / DSM 15464 / FAM18)).